The primary structure comprises 237 residues: Ribosomal RNA large subunit methyltransferase E (237 aa).

Positions 76, 78, 99, 115, and 139 each coordinate S-adenosyl-L-methionine. K179 (proton acceptor) is an active-site residue.

It belongs to the class I-like SAM-binding methyltransferase superfamily. RNA methyltransferase RlmE family.

The protein localises to the cytoplasm. The enzyme catalyses uridine(2552) in 23S rRNA + S-adenosyl-L-methionine = 2'-O-methyluridine(2552) in 23S rRNA + S-adenosyl-L-homocysteine + H(+). In terms of biological role, specifically methylates the uridine in position 2552 of 23S rRNA at the 2'-O position of the ribose in the fully assembled 50S ribosomal subunit. This is Ribosomal RNA large subunit methyltransferase E from Rhodopseudomonas palustris (strain TIE-1).